Reading from the N-terminus, the 146-residue chain is uncharacterized protein (146 aa).

Residues 1 to 120 form the N-acetyltransferase domain; that stretch reads MTDKFDANDE…TILKWEKNMD (120 aa).

This sequence belongs to the acetyltransferase family.

This is an uncharacterized protein from Streptococcus pyogenes serotype M6 (strain ATCC BAA-946 / MGAS10394).